The following is a 219-amino-acid chain: MRMRRKPWARPELEACDFFVANPKENKGNWKNTFKNTENPIYLELGCGKGTFMAVHGSDNPNINYIAIDIKDEVLVLAKRSIEKAYEEKNKALDNVKLMPQEIALIDTILDSNDKIERIYINFCNPWPKDRHKKRRLTHTRQLTKYRDFLVDGGEIHFKTDDDELFEESLEYFKECNFEITYITRDLHNSGYEYNVVTEHEEMFSKQGIKIKFLIAKKL.

Residues Glu-44, Asp-69, Glu-102, and Asn-125 each coordinate S-adenosyl-L-methionine. Lys-129 and Asp-161 together coordinate substrate.

Belongs to the class I-like SAM-binding methyltransferase superfamily. TrmB family.

The enzyme catalyses guanosine(46) in tRNA + S-adenosyl-L-methionine = N(7)-methylguanosine(46) in tRNA + S-adenosyl-L-homocysteine. It functions in the pathway tRNA modification; N(7)-methylguanine-tRNA biosynthesis. Catalyzes the formation of N(7)-methylguanine at position 46 (m7G46) in tRNA. This chain is tRNA (guanine-N(7)-)-methyltransferase, found in Clostridium perfringens (strain 13 / Type A).